The sequence spans 415 residues: Multidrug resistance protein MdtA (415 aa).

Positions 1 to 21 (MKGSYKSRWVIVIVVVIAAIA) are cleaved as a signal peptide. 2 disordered regions span residues 32–59 (SRSA…SGPL) and 392–415 (EAQS…GARS). Positions 399-415 (SEEKATSREYAKKGARS) are enriched in basic and acidic residues.

This sequence belongs to the membrane fusion protein (MFP) (TC 8.A.1) family. Part of a tripartite efflux system composed of MdtA, MdtB and MdtC.

It localises to the cell inner membrane. The MdtABC tripartite complex confers resistance against novobiocin and deoxycholate. This is Multidrug resistance protein MdtA from Escherichia coli (strain SMS-3-5 / SECEC).